The following is a 632-amino-acid chain: Mitochondrial distribution and morphology protein 34 (632 aa).

The region spanning 1-203 (MSFKVNWNSL…LPTLIHQLSL (203 aa)) is the SMP-LTD domain. Disordered regions lie at residues 221–253 (ANAS…TSSL) and 384–435 (KPKR…SSTL). Positions 224–252 (STSSSSTSSTSSSTTSSSSSSSPSSFTSS) are enriched in low complexity. Residues 384-400 (KPKRRVIRLGKSKNKSK) show a composition bias toward basic residues. Residues 401 to 412 (SKTETKTEHNDE) show a composition bias toward basic and acidic residues. Residues 422–435 (PLSSTPASSSSSTL) show a composition bias toward low complexity.

It belongs to the MDM34 family. Component of the ER-mitochondria encounter structure (ERMES) or MDM complex, composed of MMM1, MDM10, MDM12 and MDM34.

The protein resides in the mitochondrion outer membrane. In terms of biological role, component of the ERMES/MDM complex, which serves as a molecular tether to connect the endoplasmic reticulum (ER) and mitochondria. Components of this complex are involved in the control of mitochondrial shape and protein biogenesis, and function in nonvesicular lipid trafficking between the ER and mitochondria. MDM34 is required for the interaction of the ER-resident membrane protein MMM1 and the outer mitochondrial membrane-resident beta-barrel protein MDM10. The chain is Mitochondrial distribution and morphology protein 34 from Lodderomyces elongisporus (strain ATCC 11503 / CBS 2605 / JCM 1781 / NBRC 1676 / NRRL YB-4239) (Yeast).